Consider the following 367-residue polypeptide: Flagellar P-ring protein (367 aa).

Residues 1–18 (MFRALITALFCFSGLALA) form the signal peptide.

It belongs to the FlgI family. As to quaternary structure, the basal body constitutes a major portion of the flagellar organelle and consists of four rings (L,P,S, and M) mounted on a central rod.

It is found in the periplasm. Its subcellular location is the bacterial flagellum basal body. In terms of biological role, assembles around the rod to form the L-ring and probably protects the motor/basal body from shearing forces during rotation. The protein is Flagellar P-ring protein of Rhizorhabdus wittichii (strain DSM 6014 / CCUG 31198 / JCM 15750 / NBRC 105917 / EY 4224 / RW1) (Sphingomonas wittichii).